The primary structure comprises 484 residues: Glutamate--tRNA ligase (484 aa).

Positions 11–21 (PSPTGLLHIGN) match the 'HIGH' region motif. The 'KMSKS' region signature appears at 255–259 (KLSKR). Lys258 provides a ligand contact to ATP.

It belongs to the class-I aminoacyl-tRNA synthetase family. Glutamate--tRNA ligase type 1 subfamily. As to quaternary structure, monomer.

It localises to the cytoplasm. It catalyses the reaction tRNA(Glu) + L-glutamate + ATP = L-glutamyl-tRNA(Glu) + AMP + diphosphate. Catalyzes the attachment of glutamate to tRNA(Glu) in a two-step reaction: glutamate is first activated by ATP to form Glu-AMP and then transferred to the acceptor end of tRNA(Glu). This Streptococcus agalactiae serotype V (strain ATCC BAA-611 / 2603 V/R) protein is Glutamate--tRNA ligase.